The chain runs to 305 residues: tRNA dimethylallyltransferase (305 aa).

8–15 contributes to the ATP binding site; the sequence is GPTAVGKT. 10–15 contacts substrate; that stretch reads TAVGKT. The interval 33 to 36 is interaction with substrate tRNA; sequence DSRQ.

This sequence belongs to the IPP transferase family. In terms of assembly, monomer. Mg(2+) serves as cofactor.

The enzyme catalyses adenosine(37) in tRNA + dimethylallyl diphosphate = N(6)-dimethylallyladenosine(37) in tRNA + diphosphate. Its function is as follows. Catalyzes the transfer of a dimethylallyl group onto the adenine at position 37 in tRNAs that read codons beginning with uridine, leading to the formation of N6-(dimethylallyl)adenosine (i(6)A). This chain is tRNA dimethylallyltransferase, found in Thermotoga maritima (strain ATCC 43589 / DSM 3109 / JCM 10099 / NBRC 100826 / MSB8).